A 294-amino-acid polypeptide reads, in one-letter code: Metallophosphoesterase MPPED2 (294 aa).

Mn(2+) is bound by residues aspartate 65, histidine 67, aspartate 86, asparagine 117, and histidine 213. Asparagine 117–histidine 118 contacts GMP. GMP contacts are provided by residues lysine 225 to glutamate 226 and glycine 252 to glutamate 255. Histidine 254 is a Mn(2+) binding site.

It belongs to the UPF0046 family. In terms of assembly, homodimer. Requires Mn(2+) as cofactor. The cofactor is Co(2+). In terms of tissue distribution, expressed predominantly in fetal brain.

Inhibited by nmolar levels of AMP and GMP. Displays low metallophosphoesterase activity (in vitro). May play a role in the development of the nervous system. In Homo sapiens (Human), this protein is Metallophosphoesterase MPPED2 (MPPED2).